We begin with the raw amino-acid sequence, 503 residues long: Lysine--tRNA ligase (503 aa).

Residues Glu-414 and Glu-421 each contribute to the Mg(2+) site.

The protein belongs to the class-II aminoacyl-tRNA synthetase family. As to quaternary structure, homodimer. It depends on Mg(2+) as a cofactor.

It is found in the cytoplasm. The catalysed reaction is tRNA(Lys) + L-lysine + ATP = L-lysyl-tRNA(Lys) + AMP + diphosphate. This Laribacter hongkongensis (strain HLHK9) protein is Lysine--tRNA ligase.